A 275-amino-acid chain; its full sequence is 2,3,4,5-tetrahydropyridine-2,6-dicarboxylate N-succinyltransferase (275 aa).

Residues R106 and D143 each contribute to the substrate site.

Belongs to the transferase hexapeptide repeat family. Homotrimer.

It localises to the cytoplasm. The catalysed reaction is (S)-2,3,4,5-tetrahydrodipicolinate + succinyl-CoA + H2O = (S)-2-succinylamino-6-oxoheptanedioate + CoA. It participates in amino-acid biosynthesis; L-lysine biosynthesis via DAP pathway; LL-2,6-diaminopimelate from (S)-tetrahydrodipicolinate (succinylase route): step 1/3. This is 2,3,4,5-tetrahydropyridine-2,6-dicarboxylate N-succinyltransferase from Pelagibacter ubique (strain HTCC1062).